A 363-amino-acid chain; its full sequence is Fructose-bisphosphate aldolase, muscle type (363 aa).

2 residues coordinate substrate: Arg-56 and Lys-147. Lys-230 acts as the Schiff-base intermediate with dihydroxyacetone-P in catalysis.

It belongs to the class I fructose-bisphosphate aldolase family. Homotetramer. Expressed mainly in the skeletal muscle, heart muscle, brain, and some other tissues, but probably not in liver.

The enzyme catalyses beta-D-fructose 1,6-bisphosphate = D-glyceraldehyde 3-phosphate + dihydroxyacetone phosphate. Its pathway is carbohydrate degradation; glycolysis; D-glyceraldehyde 3-phosphate and glycerone phosphate from D-glucose: step 4/4. This chain is Fructose-bisphosphate aldolase, muscle type, found in Lethenteron camtschaticum (Japanese lamprey).